A 502-amino-acid chain; its full sequence is Chromatin structure-remodeling complex protein RSC58 (502 aa).

Positions 19–134 constitute a Bromo domain; the sequence is SILNAASVKC…KFSSELLLRE (116 aa). The tract at residues 336–378 is disordered; it reads NEEGINRKQNDENNKNVDGKSNGVQDDGGDNDNDATIASANSE. Basic and acidic residues predominate over residues 339–353; that stretch reads GINRKQNDENNKNVD.

Component of the two forms of the RSC complex composed of at least either RSC1 or RSC2, and ARP7, ARP9, LDB7, NPL6, RSC3, RSC30, RSC4, RSC58, RSC6, RSC8, RSC9, SFH1, STH1, HTL1 and probably RTT102. The complexes interact with histone and histone variant components of centromeric chromatin.

It localises to the nucleus. Its function is as follows. Component of the chromatin structure-remodeling complex (RSC), which is involved in transcription regulation and nucleosome positioning. RSC is responsible for the transfer of a histone octamer from a nucleosome core particle to naked DNA. The reaction requires ATP and involves an activated RSC-nucleosome intermediate. Remodeling reaction also involves DNA translocation, DNA twist and conformational change. As a reconfigurer of centromeric and flanking nucleosomes, RSC complex is required both for proper kinetochore function in chromosome segregation and, via a PKC1-dependent signaling pathway, for organization of the cellular cytoskeleton. This Saccharomyces cerevisiae (strain ATCC 204508 / S288c) (Baker's yeast) protein is Chromatin structure-remodeling complex protein RSC58 (RSC58).